The sequence spans 424 residues: UDP-N-acetylglucosamine 1-carboxyvinyltransferase (424 aa).

22 to 23 serves as a coordination point for phosphoenolpyruvate; the sequence is KN. Residue arginine 96 coordinates UDP-N-acetyl-alpha-D-glucosamine. Cysteine 120 (proton donor) is an active-site residue. A 2-(S-cysteinyl)pyruvic acid O-phosphothioketal modification is found at cysteine 120. UDP-N-acetyl-alpha-D-glucosamine-binding positions include 125-129, aspartate 312, and isoleucine 334; that span reads RPVDQ.

Belongs to the EPSP synthase family. MurA subfamily.

It localises to the cytoplasm. The catalysed reaction is phosphoenolpyruvate + UDP-N-acetyl-alpha-D-glucosamine = UDP-N-acetyl-3-O-(1-carboxyvinyl)-alpha-D-glucosamine + phosphate. It participates in cell wall biogenesis; peptidoglycan biosynthesis. In terms of biological role, cell wall formation. Adds enolpyruvyl to UDP-N-acetylglucosamine. This Polynucleobacter asymbioticus (strain DSM 18221 / CIP 109841 / QLW-P1DMWA-1) (Polynucleobacter necessarius subsp. asymbioticus) protein is UDP-N-acetylglucosamine 1-carboxyvinyltransferase.